A 184-amino-acid polypeptide reads, in one-letter code: Guanylate kinase (184 aa).

One can recognise a Guanylate kinase-like domain in the interval 5–183 (NGLIVITGPS…ALLEIKKLIK (179 aa)). Position 12–19 (12–19 (GPSGVGKG)) interacts with ATP.

Belongs to the guanylate kinase family.

It is found in the cytoplasm. It carries out the reaction GMP + ATP = GDP + ADP. Essential for recycling GMP and indirectly, cGMP. In Prochlorococcus marinus (strain SARG / CCMP1375 / SS120), this protein is Guanylate kinase.